A 536-amino-acid polypeptide reads, in one-letter code: Inactive phospholipase D5 (536 aa).

Residues 1-68 are Cytoplasmic-facing; the sequence is MEIRQHEWLS…DKLEHSQQKC (68 aa). The chain crosses the membrane as a helical span at residues 69–89; that stretch reads IVIFALVCCFAVLVALIFSAV. The Extracellular segment spans residues 90-536; sequence DIMGEDEDGL…NATGREPLSV (447 aa). N-linked (GlcNAc...) asparagine glycosylation is present at Asn121. The 28-residue stretch at 215–242 folds into the PLD phosphodiesterase 1 domain; the sequence is NKGRLQSSFWIVDKQHVYIGSAGLDWRS. Asn302 carries N-linked (GlcNAc...) asparagine glycosylation. Residues 434-460 enclose the PLD phosphodiesterase 2 domain; it reads FPKLNRNKYMVTDGAAYIGNFDWVGND. The segment at 503-536 is disordered; the sequence is QPTKQPNCSSLSKLKSPSKQPAMANATGREPLSV. Residues 511-521 show a composition bias toward low complexity; the sequence is SSLSKLKSPSK.

It belongs to the phospholipase D family.

The protein localises to the membrane. The chain is Inactive phospholipase D5 (Pld5) from Mus musculus (Mouse).